The following is a 221-amino-acid chain: Thiopurine S-methyltransferase (221 aa).

Residues tryptophan 12, leucine 47, glutamate 68, and arginine 125 each contribute to the S-adenosyl-L-methionine site.

It belongs to the class I-like SAM-binding methyltransferase superfamily. TPMT family.

Its subcellular location is the cytoplasm. The enzyme catalyses S-adenosyl-L-methionine + a thiopurine = S-adenosyl-L-homocysteine + a thiopurine S-methylether.. The sequence is that of Thiopurine S-methyltransferase from Legionella pneumophila (strain Corby).